Consider the following 855-residue polypeptide: MSNSSARPESLSEYLAHLPLSDEQRAELARCTSFSELHQHLAAQPAASTTEAAQASVGPRLTVGSAAELEEAEMLGVDASGRLCLKIAPPIKRTKVVPEPWRTNVLIRMWRRMTGRTNAPQPPKRELPPARWRTVGSIRRYILLTLMIGQTLVAGWYMKGILPYQGWSFVDFDEIVHQPLWDTVVQVWPYALQTSILVLFGILFCWVSAGFWTALMGFLELLTGRDKYKISGSSAGNEPIAPEARTALVMPICNEDVPRVFAGLRATFESVAASGNLDRFDFFVLSDTNDTDIAVAEQQAWLDVCREAKGFGRIFYRRRRRRVKRKSGNLDDFCRRWGGEYKYMVVLDADSVMSGECLSSLVRLMEANPDAGIIQTGPKASGMDTLYARLQQFATRVYGPLFTAGLHFWQLGESHYWGHNAIIRMKPFIEHCALAPLPGKGAFAGAILSHDFVEAALMRRAGWGVWIAYDLPGSYEELPPNLLDELKRDRRWCHGNLMNFRLFLVKGMHPVHRAVFLTGVMSYLSAPLWFLFLVLSTALLATNTLMEPQYFIEPFQLYPLWPQWHPEKAIALFSTTIVLLFLPKLLSVILIWAKGATEFGGRVKVTLSMLLEMLFSMLLAPVRMIFHTRFVLAAFLGWAATWNSPQRDDDSTPWSEAVRRHGPQTLLGIAWASLVAWLNPSFLWWLAPIVGSLVLSIPVSVISSRVRLGLAARDEKLFLIPEEYATPPELLATDQYTHENRWHALHDGFVRAVVDPRQNALACAMATARHGQAAPIEALRAERVAKALEVGPKGLDGNTRLALLSDPVALSRLHEQVWAEHNTAWIDVWRASIDNDPHSPLLPLHPENVAQPALA.

Helical transmembrane passes span 142-162, 196-216, 515-535, 572-592, 606-626, and 682-702; these read ILLT…KGIL, ILVL…TALM, VFLT…FLVL, LFST…ILIW, TLSM…RMIF, and FLWW…VSVI.

It belongs to the glycosyltransferase 2 family. OpgH subfamily.

It localises to the cell inner membrane. It participates in glycan metabolism; osmoregulated periplasmic glucan (OPG) biosynthesis. In terms of biological role, involved in the biosynthesis of osmoregulated periplasmic glucans (OPGs). This Pseudomonas entomophila (strain L48) protein is Glucans biosynthesis glucosyltransferase H.